Reading from the N-terminus, the 859-residue chain is Catenin delta-1 (859 aa).

Residues 15–44 adopt a coiled-coil conformation; it reads SVRAQEAQFELLSRALEEERRHVTAQLDRV. Residues 226–254 are disordered; that stretch reads IDGPDYATTGRRGANGGDPRRRLRSYEDP. Positions 243-254 are enriched in basic and acidic residues; it reads DPRRRLRSYEDP. 10 ARM repeats span residues 279 to 317, 320 to 359, 363 to 401, 402 to 446, 464 to 503, 513 to 552, 574 to 614, 621 to 660, 661 to 700, and 701 to 746; these read APNS…HLSY, EDVK…NLSY, RENK…VTGT, LWNL…RVEG, LRNI…LVDS, LRNI…VRRG, AQGY…NLCA, RCIR…NLCG, DNRN…CVIN, and TIHE…GFCL.

Belongs to the beta-catenin family. As to quaternary structure, interacts with C-cadherin and with zbtb33. As to expression, ubiquitously expressed.

Its subcellular location is the cell junction. The protein localises to the adherens junction. It is found in the cytoplasm. It localises to the nucleus. The protein resides in the cell membrane. Key regulator of cell-cell adhesion that associates with and regulates the cell adhesion properties of both C-, E- and N-cadherins, being critical for their surface stability. Beside cell-cell adhesion, regulates gene transcription through several transcription factors including ZBTB33/Kaiso2 and GLIS2, and the activity of Rho family GTPases and downstream cytoskeletal dynamics. Implicated both in cell transformation by SRC and in ligand-induced receptor signaling through the EGF, PDGF, CSF-1 and ERBB2 receptors. Required for gastrulation, axial elongation and development of the craniofacial skeleton and eye. This Xenopus laevis (African clawed frog) protein is Catenin delta-1 (ctnnd1).